A 354-amino-acid polypeptide reads, in one-letter code: Glycerol-3-phosphate dehydrogenase [NAD(+)], glycosomal (354 aa).

NAD(+) contacts are provided by residues 15–20 (GSGAFG), Phe90, Lys118, and Ala150. Residue Lys118 coordinates substrate. Lys203 acts as the Proton acceptor in catalysis. NAD(+) contacts are provided by Arg267 and Glu293. A substrate-binding site is contributed by 267 to 268 (RN). The short motif at 352-354 (SKM) is the Microbody targeting signal element.

The protein belongs to the NAD-dependent glycerol-3-phosphate dehydrogenase family.

Its subcellular location is the glycosome. The enzyme catalyses sn-glycerol 3-phosphate + NAD(+) = dihydroxyacetone phosphate + NADH + H(+). The protein is Glycerol-3-phosphate dehydrogenase [NAD(+)], glycosomal (GPD) of Trypanosoma brucei brucei.